The primary structure comprises 322 residues: Mitochondrial thiamine pyrophosphate carrier 1 (322 aa).

Solcar repeat units follow at residues 12–111 (GSKT…VTLA), 122–208 (PAAA…LRVP), and 215–310 (PFGS…VLRL). 6 consecutive transmembrane segments (helical) span residues 18–38 (MIAGATAGLIARFVIAPLDVV), 92–108 (LMYVSYSAIQFTTYRSV), 128–148 (FIAGASAGAVATTATYPLDLL), 180–200 (FFQGLGAGVGQIIPYMGIFFA), 221–241 (ATAGVLASVIAKTGIFPFDLI), and 285–302 (GLTVSLFKAAPASAVTMW).

The protein belongs to the mitochondrial carrier (TC 2.A.29) family.

It is found in the mitochondrion inner membrane. Mitochondrial transporter that mediates uptake of thiamine pyrophosphate (ThPP) into mitochondria. This is Mitochondrial thiamine pyrophosphate carrier 1 (tpc1) from Sclerotinia sclerotiorum (strain ATCC 18683 / 1980 / Ss-1) (White mold).